We begin with the raw amino-acid sequence, 566 residues long: Membrane protein insertase YidC (566 aa).

5 helical membrane passes run 3–23, 346–366, 369–389, 436–456, and 509–529; these read IKRI…FNAW, GWLW…HAVV, WGWS…WFSA, GGCL…YVII, and MWIL…GLVL.

Belongs to the OXA1/ALB3/YidC family. Type 1 subfamily. In terms of assembly, interacts with the Sec translocase complex via SecD. Specifically interacts with transmembrane segments of nascent integral membrane proteins during membrane integration.

It localises to the cell inner membrane. Functionally, required for the insertion and/or proper folding and/or complex formation of integral membrane proteins into the membrane. Involved in integration of membrane proteins that insert both dependently and independently of the Sec translocase complex, as well as at least some lipoproteins. Aids folding of multispanning membrane proteins. In Coxiella burnetii (strain CbuK_Q154) (Coxiella burnetii (strain Q154)), this protein is Membrane protein insertase YidC.